A 65-amino-acid polypeptide reads, in one-letter code: Antitoxin VapB32 (65 aa).

Residues 46 to 65 (ALGGTDPQATAAPRRRTSPR) form a disordered region.

Its function is as follows. Antitoxin component of a type II toxin-antitoxin (TA) system. This chain is Antitoxin VapB32 (vapB32), found in Mycobacterium tuberculosis (strain CDC 1551 / Oshkosh).